A 352-amino-acid chain; its full sequence is C-C chemokine receptor type 5 (352 aa).

The Extracellular portion of the chain corresponds to 1 to 30; sequence MDYSMSTALYDIDYGMSEPCQKIDVKQVAA. The residue at position 3 (tyrosine 3) is a Sulfotyrosine. An O-linked (GalNAc...) serine glycan is attached at serine 6. 2 positions are modified to sulfotyrosine: tyrosine 10 and tyrosine 14. Serine 17 carries an O-linked (GalNAc...) serine glycan. Intrachain disulfides connect cysteine 20–cysteine 269 and cysteine 101–cysteine 178. Residues 31 to 58 traverse the membrane as a helical segment; the sequence is RLLPPLYSLVFIFGFVGNLLVVLILITC. The Cytoplasmic portion of the chain corresponds to 59 to 68; that stretch reads KKLKSMTDIY. The helical transmembrane segment at 69-89 threads the bilayer; the sequence is LLNLAISDLLFLLTLPLWAHY. Residues 90–102 lie on the Extracellular side of the membrane; that stretch reads AAAEWDFGGAMCK. A helical transmembrane segment spans residues 103–124; the sequence is VFTGMYHMGYFGGIFFIILLTI. Residues 125 to 141 are Cytoplasmic-facing; that stretch reads DRYLAIVHAVFALKART. A helical transmembrane segment spans residues 142 to 166; sequence VTFGVVTSGVTWVAAILVSLPDIIF. Topologically, residues 167 to 198 are extracellular; sequence TRSQKEGFRCSCSPHFPASQYQFWKNFHTIMR. The chain crosses the membrane as a helical span at residues 199–218; sequence NILSLVLPLLVMIVCYSGIL. The Cytoplasmic segment spans residues 219–235; sequence KTLLRCRNEKRRHRAVR. The helical transmembrane segment at 236–260 threads the bilayer; it reads LIFAIMVVYFLFWAPYNVVLLLNTF. Over 261-277 the chain is Extracellular; the sequence is QEFFGLNNCSSSNRLDR. Residues 278-301 form a helical membrane-spanning segment; the sequence is AMQVTETLGMTHCCINPVVYAFVG. At 302–352 the chain is on the cytoplasmic side; that stretch reads EKFRSYLSAFFRKHVAKRLCKHCPLLPRETPEPASSVYTRSTGEQEISVGL. S-palmitoyl cysteine attachment occurs at residues cysteine 321 and cysteine 324. Positions 332–352 are disordered; sequence PEPASSVYTRSTGEQEISVGL. Phosphoserine; by BARK1 is present on residues serine 336, serine 337, serine 342, and serine 349. Polar residues predominate over residues 337–346; it reads SVYTRSTGEQ.

Belongs to the G-protein coupled receptor 1 family. Interacts with PRAF2. Efficient ligand binding to CCL3/MIP-1alpha and CCL4/MIP-1beta requires sulfation, O-glycosylation and sialic acid modifications. Glycosylation on Ser-6 is required for efficient binding of CCL4. Interacts with GRK2. Interacts with ARRB1 and ARRB2. Interacts with CNIH4. Interacts with S100A4; this interaction stimulates T-lymphocyte chemotaxis. In terms of processing, sulfated on at least 2 of the N-terminal tyrosines. Sulfation is required for efficient binding of the chemokines, CCL3 and CCL4. O-glycosylated, but not N-glycosylated. Ser-6 appears to be the major site. Also sialylated glycans present which contribute to chemokine binding. Ser-17 may also be glycosylated and, if so, with small moieties such as a T-antigen. Post-translationally, palmitoylation in the C-terminal is important for cell surface expression. In terms of processing, phosphorylation on serine residues in the C-terminal is stimulated by binding CC chemokines especially by APO-RANTES.

Its subcellular location is the cell membrane. Its function is as follows. Receptor for a number of inflammatory CC-chemokines including CCL3/MIP-1-alpha, CCL4/MIP-1-beta and RANTES and subsequently transduces a signal by increasing the intracellular calcium ion level. May play a role in the control of granulocytic lineage proliferation or differentiation. Participates in T-lymphocyte migration to the infection site by acting as a chemotactic receptor. This Oryctolagus cuniculus (Rabbit) protein is C-C chemokine receptor type 5 (CCR5).